A 62-amino-acid polypeptide reads, in one-letter code: Defensin BmKDfsin6 (62 aa).

The first 24 residues, 1 to 24 (MKVIAILFLLAFVLCTMEITMVEA), serve as a signal peptide directing secretion. Intrachain disulfides connect C28–C49, C35–C57, and C39–C59.

The protein belongs to the invertebrate defensin family. Type 2 subfamily. Highly expressed in non-venom gland (hemolymph) and moderately expressed in venom gland.

Its subcellular location is the secreted. In terms of biological role, antibacterial peptide active against Gram-positive bacteria, but not on Gram-negative bacteria. Also has weak blocking activity on Kv1.1/KCNA1, Kv1.2/KCNA2, Kv1.3/KCNA3, KCa3.1/KCNN4/IK, KCa2.3/KCNN3/SK3 and Kv11.1/KCNH2/ERG1 channels (tested at 1 uM). It inhibits potassium channel current by interacting with the pore region. This Olivierus martensii (Manchurian scorpion) protein is Defensin BmKDfsin6.